Here is a 466-residue protein sequence, read N- to C-terminus: Ribulose bisphosphate carboxylase large chain (466 aa).

K5 bears the N6,N6,N6-trimethyllysine mark. Residues N114 and T164 each coordinate substrate. The active-site Proton acceptor is K166. A substrate-binding site is contributed by K168. Mg(2+)-binding residues include K192, D194, and E195. An N6-carboxylysine modification is found at K192. H285 functions as the Proton acceptor in the catalytic mechanism. 3 residues coordinate substrate: R286, H318, and S370.

It belongs to the RuBisCO large chain family. Type I subfamily. In terms of assembly, heterohexadecamer of 8 large chains and 8 small chains; disulfide-linked. The disulfide link is formed within the large subunit homodimers. It depends on Mg(2+) as a cofactor. Post-translationally, the disulfide bond which can form in the large chain dimeric partners within the hexadecamer appears to be associated with oxidative stress and protein turnover.

It localises to the plastid. It is found in the chloroplast. The enzyme catalyses 2 (2R)-3-phosphoglycerate + 2 H(+) = D-ribulose 1,5-bisphosphate + CO2 + H2O. It carries out the reaction D-ribulose 1,5-bisphosphate + O2 = 2-phosphoglycolate + (2R)-3-phosphoglycerate + 2 H(+). In terms of biological role, ruBisCO catalyzes two reactions: the carboxylation of D-ribulose 1,5-bisphosphate, the primary event in carbon dioxide fixation, as well as the oxidative fragmentation of the pentose substrate in the photorespiration process. Both reactions occur simultaneously and in competition at the same active site. The sequence is that of Ribulose bisphosphate carboxylase large chain from Bixa orellana (Lipstick tree).